The chain runs to 346 residues: MKLSSEKLPKNPFSLSQYAAKQQKFFQWKKEKPDYYLHANLVDTALQFLKERIRRGDAMAYFLRGQLYFEEGWYEEALAQFEEIQEKDHQAIYQLGVMYYDGLGTIANAEKGVNYMRKILDSSCPQTMHLKFAAAYNLGRAYFEGKGVKRSDEEAERLWLLAADNGNPKASVKAQSILGLFYSMKEPKELEKAFFWHSEACGNGSLESQGALGLMYFYGQGIRQDTDAALHCLREAAERGNVYAQGTLVEYYYKMKFFTKCVSFSKRIADYDEVHDIPMIAHVTDCLPEFIIKGMAMAAFYHGRCLQLGLGIMKDEESAKHYYSKACRLNPTLADELHSLLIHQRI.

Residues Ala58–Ala91 form a TPR repeat. Sel1-like repeat units follow at residues Ile92 to Cys124, Phe132 to Asn167, Val172 to Ser205, Leu206 to Asn241, Val242 to Asp276, and Ala296 to Pro331.

Interacts with LRP2.

It is found in the cytoplasm. In terms of biological role, may act as an adapter that regulates LRP2 function. In Mus musculus (Mouse), this protein is LRP2-binding protein (Lrp2bp).